Consider the following 230-residue polypeptide: Endonuclease NucS (230 aa).

Belongs to the NucS endonuclease family.

It is found in the cytoplasm. Cleaves both 3' and 5' ssDNA extremities of branched DNA structures. This is Endonuclease NucS from Corynebacterium efficiens (strain DSM 44549 / YS-314 / AJ 12310 / JCM 11189 / NBRC 100395).